A 238-amino-acid polypeptide reads, in one-letter code: 14-3-3 protein 2 (238 aa).

It belongs to the 14-3-3 family.

Its function is as follows. Probable adapter protein. The protein is 14-3-3 protein 2 of Entamoeba histolytica (strain ATCC 30459 / HM-1:IMSS / ABRM).